A 287-amino-acid polypeptide reads, in one-letter code: Putative ankyrin repeat protein R791 (287 aa).

ANK repeat units follow at residues 40–71 (HNFN…PLVF), 76–105 (NVHD…NIET), 107–134 (NDDV…IDNK), 135–164 (TIFE…DIKA), 165–194 (KDNF…TIDI), 196–224 (DDTY…DYRT), and 225–254 (VDDL…DIEA).

The sequence is that of Putative ankyrin repeat protein R791 from Acanthamoeba polyphaga (Amoeba).